Here is a 391-residue protein sequence, read N- to C-terminus: Elongation factor Tu 1 (391 aa).

The region spanning 10–201 (KLHVNIGTIG…EVDRYIPTPE (192 aa)) is the tr-type G domain. The segment at 19-26 (GHVDHGKT) is G1. 19-26 (GHVDHGKT) lines the GTP pocket. Thr26 contributes to the Mg(2+) binding site. Residues 55–59 (GITIS) are G2. The segment at 76-79 (DCPG) is G3. GTP contacts are provided by residues 76–80 (DCPGH) and 131–134 (NKVD). Positions 131–134 (NKVD) are G4. The segment at 169–171 (SAL) is G5.

It belongs to the TRAFAC class translation factor GTPase superfamily. Classic translation factor GTPase family. EF-Tu/EF-1A subfamily. As to quaternary structure, monomer.

The protein resides in the cytoplasm. It catalyses the reaction GTP + H2O = GDP + phosphate + H(+). Its function is as follows. GTP hydrolase that promotes the GTP-dependent binding of aminoacyl-tRNA to the A-site of ribosomes during protein biosynthesis. The protein is Elongation factor Tu 1 of Bartonella bacilliformis (strain ATCC 35685 / KC583 / Herrer 020/F12,63).